A 404-amino-acid chain; its full sequence is uncharacterized protein (404 aa).

Residues cysteine 69, cysteine 75, cysteine 78, and cysteine 166 each coordinate [4Fe-4S] cluster. 4 residues coordinate S-adenosyl-L-methionine: glutamine 226, tyrosine 253, glutamate 274, and aspartate 334. The Nucleophile role is filled by cysteine 361.

It belongs to the class I-like SAM-binding methyltransferase superfamily. RNA M5U methyltransferase family.

This is an uncharacterized protein from Treponema denticola (strain ATCC 35405 / DSM 14222 / CIP 103919 / JCM 8153 / KCTC 15104).